Reading from the N-terminus, the 328-residue chain is Opticin (328 aa).

Residues 1–19 (MKFLAFLSLLSLVLQKAET) form the signal peptide. The N-linked (GlcNAc...) asparagine glycan is linked to N46. The residue at position 69 (Y69) is a Sulfotyrosine. N-linked (GlcNAc...) asparagine glycans are attached at residues N80 and N101. An LRRNT domain is found at 112-149 (LLNSQSSHGLPTCLVCVCLGSSVYCDDADLENIPPLPQ). 6 LRR repeats span residues 150–171 (MTTY…DFKG), 174–195 (KLRR…ALRL), 198–219 (ALQD…PSGI), 244–265 (KLQF…LPLS), 266–286 (LRSL…TFCD), and 296–316 (QLED…PEAY). C285 and C318 are joined by a disulfide. An N-linked (GlcNAc...) asparagine glycan is attached at N308.

It belongs to the small leucine-rich proteoglycan (SLRP) family. SLRP class III subfamily. Homodimer. In terms of processing, O-glycosylated. Post-translationally, sulfated on tyrosine residues. Proteolytically cleaved by MMP1, MMP2, MMP3, MMP7, MMP8, MMP9, ADAMTS4, and ADAMTS5. Proteolytically cleaved by MMP13. Expressed in cartilage (at protein level). Expressed in the vitreous collagen, inner limiting membrane, lens capsule, trabecular meshwork, anterior surface of the iris, the area adjacent to the nonpigmented ciliary epithelium, and weakly expressed in the retina of the eye (at protein level). Expressed in the nonpigmented ciliary epithelium of the eye.

The protein resides in the secreted. It is found in the extracellular space. It localises to the extracellular matrix. Inhibits angiogenesis in the vitreous humor of the eye, and therefore represses neovascularization. Binds collagen fibrils. May be involved in collagen fiber organization via regulation of other members of the small leucine-rich repeat proteoglycan superfamily. The chain is Opticin (Optc) from Mus musculus (Mouse).